A 706-amino-acid chain; its full sequence is Elongation factor G (706 aa).

One can recognise a tr-type G domain in the interval 15-291 (LKTRNIGISA…GVLDYLASPV (277 aa)). Residues 24–31 (AHIDSGKT), 91–95 (DTPGH), and 145–148 (NKLD) contribute to the GTP site.

Belongs to the TRAFAC class translation factor GTPase superfamily. Classic translation factor GTPase family. EF-G/EF-2 subfamily.

It is found in the cytoplasm. Functionally, catalyzes the GTP-dependent ribosomal translocation step during translation elongation. During this step, the ribosome changes from the pre-translocational (PRE) to the post-translocational (POST) state as the newly formed A-site-bound peptidyl-tRNA and P-site-bound deacylated tRNA move to the P and E sites, respectively. Catalyzes the coordinated movement of the two tRNA molecules, the mRNA and conformational changes in the ribosome. The sequence is that of Elongation factor G from Leptospira borgpetersenii serovar Hardjo-bovis (strain L550).